An 88-amino-acid polypeptide reads, in one-letter code: DNA-directed RNA polymerase subunit omega (88 aa).

It belongs to the RNA polymerase subunit omega family. The RNAP catalytic core consists of 2 alpha, 1 beta, 1 beta' and 1 omega subunit. When a sigma factor is associated with the core the holoenzyme is formed, which can initiate transcription.

The catalysed reaction is RNA(n) + a ribonucleoside 5'-triphosphate = RNA(n+1) + diphosphate. Promotes RNA polymerase assembly. Latches the N- and C-terminal regions of the beta' subunit thereby facilitating its interaction with the beta and alpha subunits. The polypeptide is DNA-directed RNA polymerase subunit omega (Haemophilus influenzae (strain PittEE)).